Here is a 154-residue protein sequence, read N- to C-terminus: Lipoprotein signal peptidase (154 aa).

2 consecutive transmembrane segments (helical) span residues 55–75 (GHMWFFYLITVIVIGIIIYIM) and 84–104 (LFSISLAFILGGAIGNFIDRI). Residues Asp-111 and Asp-129 contribute to the active site. Residues 124–144 (IFNVADAALSVGVVLMLVYVF) traverse the membrane as a helical segment.

Belongs to the peptidase A8 family.

The protein localises to the cell membrane. It carries out the reaction Release of signal peptides from bacterial membrane prolipoproteins. Hydrolyzes -Xaa-Yaa-Zaa-|-(S,diacylglyceryl)Cys-, in which Xaa is hydrophobic (preferably Leu), and Yaa (Ala or Ser) and Zaa (Gly or Ala) have small, neutral side chains.. Its pathway is protein modification; lipoprotein biosynthesis (signal peptide cleavage). This protein specifically catalyzes the removal of signal peptides from prolipoproteins. The polypeptide is Lipoprotein signal peptidase (Listeria innocua serovar 6a (strain ATCC BAA-680 / CLIP 11262)).